Reading from the N-terminus, the 200-residue chain is MDLPSVQSKITEIEGDLFHAPDGAALIHACNCQGSWGKGIAKAFKDKYPAAFAIYRSHCQNLLSSPRYRFEPAVQSEESHARSSRGVQLPEGTALIIPPQKRDSEANGKKHWIICLFTSRGFGRAVSPPDVIVRNTELAVADMTRQLAELQAGQSSEEESVEELWSCRFNAGLFGVPWERSRTVLEDAGLEVTVVRPHGG.

One can recognise a Macro domain in the interval 1-200; the sequence is MDLPSVQSKI…EVTVVRPHGG (200 aa). Substrate-binding positions include 15 to 17, 29 to 31, 36 to 41, and 169 to 175; these read GDL, ACN, WGKGIA, and FNAGLFG.

Belongs to the POA1 family.

It catalyses the reaction ADP-alpha-D-ribose 1''-phosphate + H2O = ADP-D-ribose + phosphate. Its function is as follows. Highly specific phosphatase involved in the metabolism of ADP-ribose 1''-phosphate (Appr1p) which is produced as a consequence of tRNA splicing. This chain is ADP-ribose 1''-phosphate phosphatase (poa1), found in Neosartorya fischeri (strain ATCC 1020 / DSM 3700 / CBS 544.65 / FGSC A1164 / JCM 1740 / NRRL 181 / WB 181) (Aspergillus fischerianus).